Reading from the N-terminus, the 164-residue chain is ATP synthase subunit b (164 aa).

A helical transmembrane segment spans residues 8-28; the sequence is IGLFFWQTIVFLILLFLMAKF.

This sequence belongs to the ATPase B chain family. F-type ATPases have 2 components, F(1) - the catalytic core - and F(0) - the membrane proton channel. F(1) has five subunits: alpha(3), beta(3), gamma(1), delta(1), epsilon(1). F(0) has three main subunits: a(1), b(2) and c(10-14). The alpha and beta chains form an alternating ring which encloses part of the gamma chain. F(1) is attached to F(0) by a central stalk formed by the gamma and epsilon chains, while a peripheral stalk is formed by the delta and b chains.

The protein resides in the cell membrane. F(1)F(0) ATP synthase produces ATP from ADP in the presence of a proton or sodium gradient. F-type ATPases consist of two structural domains, F(1) containing the extramembraneous catalytic core and F(0) containing the membrane proton channel, linked together by a central stalk and a peripheral stalk. During catalysis, ATP synthesis in the catalytic domain of F(1) is coupled via a rotary mechanism of the central stalk subunits to proton translocation. Functionally, component of the F(0) channel, it forms part of the peripheral stalk, linking F(1) to F(0). This Christiangramia forsetii (strain DSM 17595 / CGMCC 1.15422 / KT0803) (Gramella forsetii) protein is ATP synthase subunit b.